A 441-amino-acid polypeptide reads, in one-letter code: Histidine--tRNA ligase (441 aa).

Belongs to the class-II aminoacyl-tRNA synthetase family. As to quaternary structure, homodimer.

Its subcellular location is the cytoplasm. It catalyses the reaction tRNA(His) + L-histidine + ATP = L-histidyl-tRNA(His) + AMP + diphosphate + H(+). This is Histidine--tRNA ligase from Synechococcus sp. (strain WH7803).